The chain runs to 465 residues: MPYFTRLILFLFCLMVLVESRKPKRKRWTGQVEMPKPSHLYKKNLDVTKIRKGKPQQLLRVDEHDFSMRPAFGGPAIPVGVDVQVESLDSISEVDMDFTMTLYLRHYWKDERLAFSSASNKSMTFDGRLVKKIWVPDVFFVHSKRSFTHDTTTDNIMLRVFPDGHVLYSMRITVTAMCNMDFSHFPLDSQTCSLELESYAYTDEDLMLYWKNGDESLKTDEKISLSQFLIQKFHTTSRLAFYSSTGWYNRLYINFTLRRHIFFFLLQTYFPATLMVMLSWVSFWIDRRAVPARVSLGITTVLTMTTIITGVNASMPRVSYVKAVDIYLWVSFVFVFLSVLEYAAVNYLTTVQERKERKLREKFPCMCGMLHSKTMMLDGSYSESEANSLAGYPRSHILTEEERQDKIVVHLGLSGEANAARKKGLLKGQTGFRIFQNTHAIDKYSRLIFPASYIFFNLIYWSVFS.

The first 20 residues, 1–20 (MPYFTRLILFLFCLMVLVES), serve as a signal peptide directing secretion. The Extracellular portion of the chain corresponds to 21-260 (RKPKRKRWTG…LYINFTLRRH (240 aa)). A 4-aminobutanoate-binding site is contributed by Arg-105. Asn-120 is a glycosylation site (N-linked (GlcNAc...) asparagine). Ser-169 lines the 4-aminobutanoate pocket. A disulfide bond links Cys-178 and Cys-192. Position 197 (Glu-197) interacts with 4-aminobutanoate. N-linked (GlcNAc...) asparagine glycosylation is present at Asn-254. The helical transmembrane segment at 261–281 (IFFFLLQTYFPATLMVMLSWV) threads the bilayer. Residues 282 to 293 (SFWIDRRAVPAR) are Cytoplasmic-facing. Residues 294-314 (VSLGITTVLTMTTIITGVNAS) form a helical membrane-spanning segment. At 315 to 325 (MPRVSYVKAVD) the chain is on the extracellular side. The chain crosses the membrane as a helical span at residues 326-346 (IYLWVSFVFVFLSVLEYAAVN). Over 347–443 (YLTTVQERKE…IFQNTHAIDK (97 aa)) the chain is Cytoplasmic. The helical transmembrane segment at 444–464 (YSRLIFPASYIFFNLIYWSVF) threads the bilayer. A topological domain (extracellular) is located at residue Ser-465.

This sequence belongs to the ligand-gated ion channel (TC 1.A.9) family. Gamma-aminobutyric acid receptor (TC 1.A.9.5) subfamily. GABRR2 sub-subfamily. As to quaternary structure, three rho subunits (rho-1/GBRR1, rho-2/GBRR2 and rho-3/GBRR3) coassemble either to form functional homopentamers or heteropentamers. Rho-2 is unable to form a functional homopentamer. Interacts with SQSTM1.

It localises to the postsynaptic cell membrane. Its subcellular location is the cell membrane. The catalysed reaction is chloride(in) = chloride(out). Functionally, rho subunit of the pentameric ligand-gated chloride channels responsible for mediating the effects of gamma-aminobutyric acid (GABA), the major inhibitory neurotransmitter in the brain. Rho-containing GABA-gated chloride channels are a subclass of GABA(A) receptors (GABAARs) entirely composed of rho subunits, where GABA molecules bind at the rho intersubunit interfaces. When activated by GABA, rho-GABAARs selectively allow the flow of chloride anions across the cell membrane down their electrochemical gradient. Rho-2 GABAARs may contribute to the regulation of glial development in the cerebellum by controlling extrasynaptic transmission. Rho-2 GABAARs are also involved in neuronal tonic (extrasynaptic) and phasic (synaptic) transmission in the Purkinje neurons of the cerebellum. Rho-2 GABAARs expressed in retina may play a role in retinal neurotransmission. This Homo sapiens (Human) protein is Gamma-aminobutyric acid receptor subunit rho-2.